A 182-amino-acid chain; its full sequence is Putative manganese efflux pump MntP (182 aa).

6 helical membrane passes run 6–26 (TVLV…GVGT), 37–57 (LSFH…FVGS), 59–79 (AADL…LFIG), 104–126 (SSLV…SFGI), 131–149 (LFLS…TWGA), and 164–181 (METV…KLLL).

The protein belongs to the MntP (TC 9.B.29) family.

It localises to the cell inner membrane. Functionally, probably functions as a manganese efflux pump. This Syntrophobacter fumaroxidans (strain DSM 10017 / MPOB) protein is Putative manganese efflux pump MntP.